A 306-amino-acid polypeptide reads, in one-letter code: MIRQRTLKSIVKATGVGLHGGRKVQLVLRPAAPDTGVVFHRVDLDPPCDLPADPYSVCDTRMCSGLERNGAKVGTVEHLMSAVAGLGVDNLHVDVDAPELPILDGSAGPFVFLLQSAGIEEQKAPKRFLRVKKAVEYREDDKWVRLEPHDGFRLTFSIVFNHPAIDKTSTSVTVDFAEHSYVRDVARARTFGFMQDVDSMRAHGLALGGSLDNAIVMDEYRVLNSDGLRYVDEFVKHKVLDAIGDLYLCGHPLLAAYSAHKAGHALNNQILRVLLEDRSAWEIATFEQPGMTPAAVSHQFELAPAT.

The Zn(2+) site is built by histidine 78, histidine 237, and aspartate 241. Residue histidine 264 is the Proton donor of the active site.

Belongs to the LpxC family. It depends on Zn(2+) as a cofactor.

It carries out the reaction a UDP-3-O-[(3R)-3-hydroxyacyl]-N-acetyl-alpha-D-glucosamine + H2O = a UDP-3-O-[(3R)-3-hydroxyacyl]-alpha-D-glucosamine + acetate. Its pathway is glycolipid biosynthesis; lipid IV(A) biosynthesis; lipid IV(A) from (3R)-3-hydroxytetradecanoyl-[acyl-carrier-protein] and UDP-N-acetyl-alpha-D-glucosamine: step 2/6. In terms of biological role, catalyzes the hydrolysis of UDP-3-O-myristoyl-N-acetylglucosamine to form UDP-3-O-myristoylglucosamine and acetate, the committed step in lipid A biosynthesis. The sequence is that of UDP-3-O-acyl-N-acetylglucosamine deacetylase from Aromatoleum aromaticum (strain DSM 19018 / LMG 30748 / EbN1) (Azoarcus sp. (strain EbN1)).